A 234-amino-acid chain; its full sequence is Preflagellin peptidase (234 aa).

Position 1 (methionine 1) is a topological domain, cytoplasmic. Residues 2–18 (INFIVGAIGLLIASIYD) form a helical membrane-spanning segment. At 19 to 23 (LKSRE) the chain is on the extracellular side. Residues 24–46 (IEDYVWVSMVIFGLIYNGYLSFI) traverse the membrane as a helical segment. The Cytoplasmic segment spans residues 47-49 (SHD). A helical membrane pass occupies residues 50–72 (MLYVIQSIVGFIVCFFLGFFMFL). The Extracellular portion of the chain corresponds to 73-78 (LGVGGG). A helical membrane pass occupies residues 79–89 (DGKLIMGLGAL). At 90–110 (IPKYNMPIHTPLGAILNYLYL) the chain is on the cytoplasmic side. A helical membrane pass occupies residues 111 to 139 (PSFPIMVVINAMFFSITLPIIIFLRNVIR). Over 140–205 (GVKPKTKKEV…EEIWVTPAIP (66 aa)) the chain is Extracellular. A helical transmembrane segment spans residues 206–217 (FVVPIFLSYLLT). The Cytoplasmic segment spans residues 218–234 (SIIGDKIIGIFLSVFGL).

The protein belongs to the peptidase A24 family. Archaeal preflagellin peptidase subfamily.

The protein resides in the cell membrane. It catalyses the reaction Cleaves the signal peptide of 3 to 12 amino acids from the N-terminal of preflagellin, usually at Arg-Gly-|- or Lys-Gly-|-, to release flagellin.. Its function is as follows. Cleaves the N-terminal leader peptide from preflagellins. In Methanocaldococcus jannaschii (strain ATCC 43067 / DSM 2661 / JAL-1 / JCM 10045 / NBRC 100440) (Methanococcus jannaschii), this protein is Preflagellin peptidase (flaK).